A 65-amino-acid polypeptide reads, in one-letter code: uncharacterized protein (65 aa).

Cys-9 functions as the Nucleophile in the catalytic mechanism. Residue Arg-15 is part of the active site.

This sequence belongs to the low molecular weight phosphotyrosine protein phosphatase family.

This is an uncharacterized protein from Synechococcus sp. (strain WH8020).